Here is a 103-residue protein sequence, read N- to C-terminus: Putative membrane protein insertion efficiency factor (103 aa).

A disordered region spans residues 68–103 (HEGGYDPVPLAKQDAKPENNSESESLLNQPTETKSL). Positions 87-103 (NSESESLLNQPTETKSL) are enriched in polar residues.

It belongs to the UPF0161 family.

Its subcellular location is the cell inner membrane. Could be involved in insertion of integral membrane proteins into the membrane. In Idiomarina loihiensis (strain ATCC BAA-735 / DSM 15497 / L2-TR), this protein is Putative membrane protein insertion efficiency factor.